We begin with the raw amino-acid sequence, 88 residues long: UPF0367 protein Tery_1229 (88 aa).

The protein belongs to the UPF0367 family.

This is UPF0367 protein Tery_1229 from Trichodesmium erythraeum (strain IMS101).